A 626-amino-acid chain; its full sequence is Elongation factor 4 (626 aa).

The region spanning 14-195 is the tr-type G domain; it reads SLIRNFCIIA…RIVVDVPAPT (182 aa). GTP-binding positions include 26-31 and 142-145; these read DHGKST and NKID. The tract at residues 603–626 is disordered; that stretch reads LSTGEGGNDRDTKDKIRAAQKSEG. The segment covering 609–626 has biased composition (basic and acidic residues); it reads GNDRDTKDKIRAAQKSEG.

Belongs to the TRAFAC class translation factor GTPase superfamily. Classic translation factor GTPase family. LepA subfamily.

It is found in the cell membrane. It catalyses the reaction GTP + H2O = GDP + phosphate + H(+). Functionally, required for accurate and efficient protein synthesis under certain stress conditions. May act as a fidelity factor of the translation reaction, by catalyzing a one-codon backward translocation of tRNAs on improperly translocated ribosomes. Back-translocation proceeds from a post-translocation (POST) complex to a pre-translocation (PRE) complex, thus giving elongation factor G a second chance to translocate the tRNAs correctly. Binds to ribosomes in a GTP-dependent manner. This chain is Elongation factor 4, found in Bifidobacterium animalis subsp. lactis (strain AD011).